Reading from the N-terminus, the 195-residue chain is Molybdenum cofactor guanylyltransferase (195 aa).

Residues Leu-12–Gly-14, Lys-25, Asn-53, Asp-70, and Asp-100 each bind GTP. Residue Asp-100 participates in Mg(2+) binding.

This sequence belongs to the MobA family. Monomer. It depends on Mg(2+) as a cofactor.

The protein localises to the cytoplasm. The catalysed reaction is Mo-molybdopterin + GTP + H(+) = Mo-molybdopterin guanine dinucleotide + diphosphate. Its function is as follows. Transfers a GMP moiety from GTP to Mo-molybdopterin (Mo-MPT) cofactor (Moco or molybdenum cofactor) to form Mo-molybdopterin guanine dinucleotide (Mo-MGD) cofactor. The polypeptide is Molybdenum cofactor guanylyltransferase (Vibrio campbellii (strain ATCC BAA-1116)).